Here is a 303-residue protein sequence, read N- to C-terminus: Probable 5-dehydro-4-deoxyglucarate dehydratase (303 aa).

Belongs to the DapA family.

It catalyses the reaction 5-dehydro-4-deoxy-D-glucarate + H(+) = 2,5-dioxopentanoate + CO2 + H2O. It participates in carbohydrate acid metabolism; D-glucarate degradation; 2,5-dioxopentanoate from D-glucarate: step 2/2. The sequence is that of Probable 5-dehydro-4-deoxyglucarate dehydratase from Acinetobacter baylyi (strain ATCC 33305 / BD413 / ADP1).